A 277-amino-acid chain; its full sequence is 2-dehydro-3-deoxyphosphooctonate aldolase (277 aa).

This sequence belongs to the KdsA family.

It is found in the cytoplasm. The catalysed reaction is D-arabinose 5-phosphate + phosphoenolpyruvate + H2O = 3-deoxy-alpha-D-manno-2-octulosonate-8-phosphate + phosphate. The protein operates within carbohydrate biosynthesis; 3-deoxy-D-manno-octulosonate biosynthesis; 3-deoxy-D-manno-octulosonate from D-ribulose 5-phosphate: step 2/3. It participates in bacterial outer membrane biogenesis; lipopolysaccharide biosynthesis. The sequence is that of 2-dehydro-3-deoxyphosphooctonate aldolase from Alkalilimnicola ehrlichii (strain ATCC BAA-1101 / DSM 17681 / MLHE-1).